Reading from the N-terminus, the 90-residue chain is Probable Fe(2+)-trafficking protein (90 aa).

It belongs to the Fe(2+)-trafficking protein family.

Could be a mediator in iron transactions between iron acquisition and iron-requiring processes, such as synthesis and/or repair of Fe-S clusters in biosynthetic enzymes. The chain is Probable Fe(2+)-trafficking protein from Coxiella burnetii (strain CbuG_Q212) (Coxiella burnetii (strain Q212)).